We begin with the raw amino-acid sequence, 260 residues long: Pyridoxine 5'-phosphate synthase (260 aa).

2 residues coordinate 3-amino-2-oxopropyl phosphate: N10 and R21. The active-site Proton acceptor is H46. 1-deoxy-D-xylulose 5-phosphate is bound by residues R48 and H53. The Proton acceptor role is filled by E76. T113 lines the 1-deoxy-D-xylulose 5-phosphate pocket. The active-site Proton donor is the H204. 3-amino-2-oxopropyl phosphate contacts are provided by residues D205 and 227–228; that span reads GH.

It belongs to the PNP synthase family. As to quaternary structure, homooctamer; tetramer of dimers.

Its subcellular location is the cytoplasm. It catalyses the reaction 3-amino-2-oxopropyl phosphate + 1-deoxy-D-xylulose 5-phosphate = pyridoxine 5'-phosphate + phosphate + 2 H2O + H(+). The protein operates within cofactor biosynthesis; pyridoxine 5'-phosphate biosynthesis; pyridoxine 5'-phosphate from D-erythrose 4-phosphate: step 5/5. Its function is as follows. Catalyzes the complicated ring closure reaction between the two acyclic compounds 1-deoxy-D-xylulose-5-phosphate (DXP) and 3-amino-2-oxopropyl phosphate (1-amino-acetone-3-phosphate or AAP) to form pyridoxine 5'-phosphate (PNP) and inorganic phosphate. This is Pyridoxine 5'-phosphate synthase from Xylella fastidiosa (strain 9a5c).